The following is a 290-amino-acid chain: Shikimate dehydrogenase (NADP(+)) (290 aa).

Residues 24 to 26 (SKS) and T71 contribute to the shikimate site. K75 functions as the Proton acceptor in the catalytic mechanism. Shikimate is bound by residues N96 and D111. NADP(+) is bound by residues 135 to 139 (GAGGA), 159 to 164 (NRTKQR), and I228. Y230 serves as a coordination point for shikimate. G251 provides a ligand contact to NADP(+).

It belongs to the shikimate dehydrogenase family. Homodimer.

It carries out the reaction shikimate + NADP(+) = 3-dehydroshikimate + NADPH + H(+). It participates in metabolic intermediate biosynthesis; chorismate biosynthesis; chorismate from D-erythrose 4-phosphate and phosphoenolpyruvate: step 4/7. Involved in the biosynthesis of the chorismate, which leads to the biosynthesis of aromatic amino acids. Catalyzes the reversible NADPH linked reduction of 3-dehydroshikimate (DHSA) to yield shikimate (SA). The polypeptide is Shikimate dehydrogenase (NADP(+)) (Bartonella tribocorum (strain CIP 105476 / IBS 506)).